A 362-amino-acid polypeptide reads, in one-letter code: Protein-glutamate methylesterase/protein-glutamine glutaminase 1 (362 aa).

The region spanning 10 to 127 is the Response regulatory domain; that stretch reads RVLVVDDSSF…ADAQRVFREE (118 aa). 4-aspartylphosphate is present on aspartate 61. The region spanning 163–357 is the CheB-type methylesterase domain; the sequence is PRPSQALAGK…LPLTQIGSEI (195 aa). Residues serine 181, histidine 208, and aspartate 306 contribute to the active site.

The protein belongs to the CheB family. In terms of processing, phosphorylated by CheA. Phosphorylation of the N-terminal regulatory domain activates the methylesterase activity.

The protein resides in the cytoplasm. It catalyses the reaction [protein]-L-glutamate 5-O-methyl ester + H2O = L-glutamyl-[protein] + methanol + H(+). It carries out the reaction L-glutaminyl-[protein] + H2O = L-glutamyl-[protein] + NH4(+). Involved in chemotaxis. Part of a chemotaxis signal transduction system that modulates chemotaxis in response to various stimuli. Catalyzes the demethylation of specific methylglutamate residues introduced into the chemoreceptors (methyl-accepting chemotaxis proteins or MCP) by CheR. Also mediates the irreversible deamidation of specific glutamine residues to glutamic acid. The chain is Protein-glutamate methylesterase/protein-glutamine glutaminase 1 from Geobacter sulfurreducens (strain ATCC 51573 / DSM 12127 / PCA).